The sequence spans 346 residues: Holliday junction branch migration complex subunit RuvB (346 aa).

The large ATPase domain (RuvB-L) stretch occupies residues 1-183 (MTEQRIIASS…FGIVQRLEFY (183 aa)). ATP contacts are provided by residues Ile-22, Arg-23, Gly-64, Lys-67, Thr-68, Thr-69, 130 to 132 (EDF), Arg-173, Tyr-183, and Arg-220. Thr-68 provides a ligand contact to Mg(2+). The small ATPAse domain (RuvB-S) stretch occupies residues 184–254 (SPQELTRIVS…VAQAAMQMLK (71 aa)). The tract at residues 257–346 (PEGFDELDRR…PGIGEPGDLF (90 aa)) is head domain (RuvB-H). Positions 293, 312, and 317 each coordinate DNA.

It belongs to the RuvB family. As to quaternary structure, homohexamer. Forms an RuvA(8)-RuvB(12)-Holliday junction (HJ) complex. HJ DNA is sandwiched between 2 RuvA tetramers; dsDNA enters through RuvA and exits via RuvB. An RuvB hexamer assembles on each DNA strand where it exits the tetramer. Each RuvB hexamer is contacted by two RuvA subunits (via domain III) on 2 adjacent RuvB subunits; this complex drives branch migration. In the full resolvosome a probable DNA-RuvA(4)-RuvB(12)-RuvC(2) complex forms which resolves the HJ.

The protein localises to the cytoplasm. The enzyme catalyses ATP + H2O = ADP + phosphate + H(+). The RuvA-RuvB-RuvC complex processes Holliday junction (HJ) DNA during genetic recombination and DNA repair, while the RuvA-RuvB complex plays an important role in the rescue of blocked DNA replication forks via replication fork reversal (RFR). RuvA specifically binds to HJ cruciform DNA, conferring on it an open structure. The RuvB hexamer acts as an ATP-dependent pump, pulling dsDNA into and through the RuvAB complex. RuvB forms 2 homohexamers on either side of HJ DNA bound by 1 or 2 RuvA tetramers; 4 subunits per hexamer contact DNA at a time. Coordinated motions by a converter formed by DNA-disengaged RuvB subunits stimulates ATP hydrolysis and nucleotide exchange. Immobilization of the converter enables RuvB to convert the ATP-contained energy into a lever motion, pulling 2 nucleotides of DNA out of the RuvA tetramer per ATP hydrolyzed, thus driving DNA branch migration. The RuvB motors rotate together with the DNA substrate, which together with the progressing nucleotide cycle form the mechanistic basis for DNA recombination by continuous HJ branch migration. Branch migration allows RuvC to scan DNA until it finds its consensus sequence, where it cleaves and resolves cruciform DNA. In Xanthomonas euvesicatoria pv. vesicatoria (strain 85-10) (Xanthomonas campestris pv. vesicatoria), this protein is Holliday junction branch migration complex subunit RuvB.